Here is a 242-residue protein sequence, read N- to C-terminus: C-reactive protein 1.1 (242 aa).

A signal peptide spans 1–24 (MKTFHGPTCGTAVSLCLLLFLTSA). In terms of domain architecture, Pentraxin (PTX) spans 30-241 (ITSKVKFPPS…GVVLSPNEIC (212 aa)). Phosphocholine-binding residues include T60 and Y63. Cystine bridges form between C62/C125 and C112/C144. Residues D85 and N86 each coordinate Ca(2+). Residue N147 is glycosylated (N-linked (GlcNAc...) asparagine). Ca(2+) is bound by residues Q169, D170, and Q180. C207 and C241 are disulfide-bonded.

Belongs to the pentraxin family. In terms of assembly, homopentamer. Pentraxin (or pentaxin) have a discoid arrangement of 5 non-covalently bound subunits. Requires Ca(2+) as cofactor.

It localises to the secreted. In terms of biological role, might serve the role of immunoglobulins. This Limulus polyphemus (Atlantic horseshoe crab) protein is C-reactive protein 1.1.